The sequence spans 215 residues: Cytochrome b6 (215 aa).

The helical transmembrane segment at 32 to 52 (IFYCLGGITFTCFLVQVATGF) threads the bilayer. Cys-35 is a binding site for heme c. Heme b-binding residues include His-86 and His-100. A run of 3 helical transmembrane segments spans residues 90 to 110 (ASMMVLMMILHVFRVWLTGGF), 116 to 136 (LTWTTGVIMAVCTVSFGVTGY), and 186 to 206 (LHTFVLPLLTAVFMLMHFLMI). Heme b contacts are provided by His-187 and His-202.

This sequence belongs to the cytochrome b family. PetB subfamily. The 4 large subunits of the cytochrome b6-f complex are cytochrome b6, subunit IV (17 kDa polypeptide, PetD), cytochrome f and the Rieske protein, while the 4 small subunits are PetG, PetL, PetM and PetN. The complex functions as a dimer. Heme b is required as a cofactor. Heme c serves as cofactor.

It localises to the plastid. Its subcellular location is the chloroplast thylakoid membrane. Component of the cytochrome b6-f complex, which mediates electron transfer between photosystem II (PSII) and photosystem I (PSI), cyclic electron flow around PSI, and state transitions. The chain is Cytochrome b6 from Stigeoclonium helveticum (Green alga).